Consider the following 363-residue polypeptide: dTDP-L-rhamnose 4-epimerase (363 aa).

Residues 18–24 (GGAGFIG), 68–69 (DV), and 90–94 (LAAET) each bind NAD(+). Positions 136 and 191 each coordinate substrate. NAD(+)-binding residues include Tyr191 and Lys195. Tyr191 acts as the Proton acceptor in catalysis. Asn220 and Arg259 together coordinate substrate.

It belongs to the NAD(P)-dependent epimerase/dehydratase family. It depends on NAD(+) as a cofactor.

It carries out the reaction dTDP-6-deoxy-beta-L-talose = dTDP-beta-L-rhamnose. It functions in the pathway bacterial outer membrane biogenesis; LPS O-antigen biosynthesis. In terms of biological role, catalyzes the interconvertion of dTDP-6-deoxy-L-talose and dTDP-L-rhamnose. The equilibrium is strongly toward dTDP-L-rhamnose. The chain is dTDP-L-rhamnose 4-epimerase (wbiB) from Burkholderia thailandensis (strain ATCC 700388 / DSM 13276 / CCUG 48851 / CIP 106301 / E264).